Consider the following 142-residue polypeptide: Large ribosomal subunit protein uL11 (142 aa).

This sequence belongs to the universal ribosomal protein uL11 family. In terms of assembly, part of the ribosomal stalk of the 50S ribosomal subunit. Interacts with L10 and the large rRNA to form the base of the stalk. L10 forms an elongated spine to which L12 dimers bind in a sequential fashion forming a multimeric L10(L12)X complex. One or more lysine residues are methylated.

Functionally, forms part of the ribosomal stalk which helps the ribosome interact with GTP-bound translation factors. The chain is Large ribosomal subunit protein uL11 from Aeromonas hydrophila subsp. hydrophila (strain ATCC 7966 / DSM 30187 / BCRC 13018 / CCUG 14551 / JCM 1027 / KCTC 2358 / NCIMB 9240 / NCTC 8049).